The chain runs to 181 residues: RING-H2 finger protein ATL72 (181 aa).

Residues Val-34–Leu-54 form a helical membrane-spanning segment. The RING-type; atypical zinc-finger motif lies at Cys-114 to Arg-156.

It belongs to the RING-type zinc finger family. ATL subfamily.

It localises to the membrane. It catalyses the reaction S-ubiquitinyl-[E2 ubiquitin-conjugating enzyme]-L-cysteine + [acceptor protein]-L-lysine = [E2 ubiquitin-conjugating enzyme]-L-cysteine + N(6)-ubiquitinyl-[acceptor protein]-L-lysine.. It functions in the pathway protein modification; protein ubiquitination. This chain is RING-H2 finger protein ATL72 (ATL72), found in Arabidopsis thaliana (Mouse-ear cress).